The primary structure comprises 201 residues: uncharacterized protein (201 aa).

A helical membrane pass occupies residues 11-31 (IWKSLYLLIIVGMLYIGYILI).

The protein resides in the membrane. This is an uncharacterized protein from Rickettsia prowazekii (strain Madrid E).